Here is a 534-residue protein sequence, read N- to C-terminus: Ankyrin repeat domain-containing protein 34C (534 aa).

ANK repeat units follow at residues 10–39 (TDGN…YINE), 43–80 (KGET…DPNI), 84–114 (SGKT…DPSL), and 118–147 (TGAS…AKGK). The disordered stretch occupies residues 159–205 (SGTKTTKQYLNVPPSPKVEDRQSPPLCTTPSDVELKTSGLASPPSEK). Residue serine 301 is modified to Phosphoserine. Disordered regions lie at residues 332 to 368 (YEKG…LKDP) and 384 to 403 (QPVG…GPLD). Residue serine 446 is modified to Phosphoserine. Positions 480-503 (SKPASPLASGLKSMAPVAPNSPKR) are disordered.

This sequence belongs to the ANKRD34 family.

The polypeptide is Ankyrin repeat domain-containing protein 34C (Ankrd34c) (Mus musculus (Mouse)).